A 294-amino-acid chain; its full sequence is Phosphoribosylaminoimidazole-succinocarboxamide synthase (294 aa).

Belongs to the SAICAR synthetase family.

The catalysed reaction is 5-amino-1-(5-phospho-D-ribosyl)imidazole-4-carboxylate + L-aspartate + ATP = (2S)-2-[5-amino-1-(5-phospho-beta-D-ribosyl)imidazole-4-carboxamido]succinate + ADP + phosphate + 2 H(+). The protein operates within purine metabolism; IMP biosynthesis via de novo pathway; 5-amino-1-(5-phospho-D-ribosyl)imidazole-4-carboxamide from 5-amino-1-(5-phospho-D-ribosyl)imidazole-4-carboxylate: step 1/2. This is Phosphoribosylaminoimidazole-succinocarboxamide synthase from Rhodococcus jostii (strain RHA1).